The primary structure comprises 674 residues: DNA mismatch repair protein MutL (674 aa).

The protein belongs to the DNA mismatch repair MutL/HexB family.

Its function is as follows. This protein is involved in the repair of mismatches in DNA. It is required for dam-dependent methyl-directed DNA mismatch repair. May act as a 'molecular matchmaker', a protein that promotes the formation of a stable complex between two or more DNA-binding proteins in an ATP-dependent manner without itself being part of a final effector complex. The chain is DNA mismatch repair protein MutL from Clostridium perfringens (strain ATCC 13124 / DSM 756 / JCM 1290 / NCIMB 6125 / NCTC 8237 / Type A).